The chain runs to 231 residues: UPF0758 protein pc1765 (231 aa).

In terms of domain architecture, MPN spans 107–229; it reads LIEHSSHAYQ…YVSFKDQNLL (123 aa). 3 residues coordinate Zn(2+): His178, His180, and Asp191. The short motif at 178-191 is the JAMM motif element; that stretch reads HNHPSGDPMPSNQD.

The protein belongs to the UPF0758 family.

In Protochlamydia amoebophila (strain UWE25), this protein is UPF0758 protein pc1765.